Here is a 784-residue protein sequence, read N- to C-terminus: Ribosome biogenesis protein BOP1 homolog (784 aa).

Residues 1–11 (MTKKLALKRRG) are compositionally biased toward basic residues. Positions 1–159 (MTKKLALKRR…DSDTSDEEDI (159 aa)) are disordered. Acidic residues-rich tracts occupy residues 27 to 36 (SENEEEEEDL), 45 to 54 (EDSTDDEGID), 62 to 73 (SEELQFESDEEG), and 84 to 111 (AEED…EDEE). 2 stretches are compositionally biased toward basic and acidic residues: residues 112–123 (KVSKSKQSDDKP) and 138–148 (LPKRDSSKPEY). Acidic residues predominate over residues 149–158 (QDSDTSDEED). 7 WD repeats span residues 445 to 486 (GHTD…RTIE), 488 to 526 (DEVV…KVLV), 570 to 612 (THFK…SQIP), 615 to 653 (KSKG…LVKK), 656 to 695 (TNSK…KPYQ), 699 to 738 (LHRN…DLLQ), and 754 to 784 (RDEF…RLYT).

The protein belongs to the WD repeat BOP1/ERB1 family.

It localises to the nucleus. The protein localises to the nucleolus. The protein resides in the nucleoplasm. Required for maturation of ribosomal RNAs and formation of the large ribosomal subunit. This is Ribosome biogenesis protein BOP1 homolog from Drosophila sechellia (Fruit fly).